Here is a 430-residue protein sequence, read N- to C-terminus: Tektin-2 (430 aa).

2 coiled-coil regions span residues 75 to 162 (KEML…FQHL) and 226 to 380 (KNRA…IACK).

It belongs to the tektin family. Microtubule inner protein component of sperm flagellar doublet microtubules. May interact with CCDC172. In terms of processing, tyrosine phosphorylated. Post-translationally, ubiquitinated, leading to its degradation. Deubiquitinated by USP16, promoting its stability.

The protein localises to the cytoplasm. The protein resides in the cytoskeleton. Its subcellular location is the cilium axoneme. It is found in the flagellum axoneme. It localises to the microtubule organizing center. Microtubule inner protein (MIP) part of the dynein-decorated doublet microtubules (DMTs) in cilia and flagellar axoneme. Plays a key role in the assembly or attachment of the inner dynein arm to microtubules in sperm flagella and tracheal cilia. Forms filamentous polymers in the walls of ciliary and flagellar microtubules. The sequence is that of Tektin-2 (Tekt2) from Rattus norvegicus (Rat).